We begin with the raw amino-acid sequence, 445 residues long: Protein kinase C and casein kinase substrate in neurons protein 1 (445 aa).

In terms of domain architecture, F-BAR spans 12 to 282 (DETTDSFWEV…TIVSASAQED (271 aa)). Coiled-coil stretches lie at residues 146–167 (AKKL…KEEK) and 183–219 (TTDQ…NKCT). The disordered stretch occupies residues 327 to 390 (LTQVTHGAEH…PFEEDSKGVR (64 aa)). 2 stretches are compositionally biased toward polar residues: residues 338–358 (TPQT…QYSA) and 368–379 (TAAQSASETNGG). Residues 386–445 (SKGVRVRALYDYEGQEQDELTFKAGDELTKLEDEDEQGWCKGRLDSGQLGLYPANYVEPV) form the SH3 domain.

Interacts with cobl.

It localises to the cytoplasm. The protein resides in the cytosol. The protein localises to the cell membrane. It is found in the cell projection. Its subcellular location is the synapse. It localises to the synaptosome. The protein resides in the cytoplasmic vesicle membrane. The protein localises to the ruffle membrane. It is found in the membrane. In terms of biological role, binds to membranes via its F-BAR domain and mediates membrane tubulation. Plays a role in cellular transport processes by recruiting dynamins to membranes. Plays a role in the reorganization of the actin cytoskeleton and in neuron morphogenesis via its interaction with cobl, and by recruiting cobl to the cell cortex. Plays a role in the regulation of neurite formation, neurite branching and the regulation of neurite length. Required for normal synaptic vesicle endocytosis; this process retrieves previously released neurotransmitters to accommodate multiple cycles of neurotransmission. Required for normal excitatory and inhibitory synaptic transmission. Required for normal embryonic development, including normal development of laterality, normal body size and shape, as well as normal brain and heart development. Required for normal development of stereocilia and kinocilia in sensory hair cells of neuromasts in the posterior lateral line organ, and thus also for balance keeping and normal swimming behavior. The protein is Protein kinase C and casein kinase substrate in neurons protein 1 (pacsin1b) of Danio rerio (Zebrafish).